Consider the following 95-residue polypeptide: Aspartyl/glutamyl-tRNA(Asn/Gln) amidotransferase subunit C (95 aa).

This sequence belongs to the GatC family. Heterotrimer of A, B and C subunits.

The enzyme catalyses L-glutamyl-tRNA(Gln) + L-glutamine + ATP + H2O = L-glutaminyl-tRNA(Gln) + L-glutamate + ADP + phosphate + H(+). The catalysed reaction is L-aspartyl-tRNA(Asn) + L-glutamine + ATP + H2O = L-asparaginyl-tRNA(Asn) + L-glutamate + ADP + phosphate + 2 H(+). Its function is as follows. Allows the formation of correctly charged Asn-tRNA(Asn) or Gln-tRNA(Gln) through the transamidation of misacylated Asp-tRNA(Asn) or Glu-tRNA(Gln) in organisms which lack either or both of asparaginyl-tRNA or glutaminyl-tRNA synthetases. The reaction takes place in the presence of glutamine and ATP through an activated phospho-Asp-tRNA(Asn) or phospho-Glu-tRNA(Gln). This Nitrobacter hamburgensis (strain DSM 10229 / NCIMB 13809 / X14) protein is Aspartyl/glutamyl-tRNA(Asn/Gln) amidotransferase subunit C.